Reading from the N-terminus, the 309-residue chain is ESX-3 secretion system protein EccE3 (309 aa).

2 helical membrane-spanning segments follow: residues 5–25 (IALA…QTTT) and 29–49 (VLGV…GMFL).

Belongs to the EccE family. In terms of assembly, part of the ESX-3 / type VII secretion system (T7SS), which is composed of cytosolic and membrane components. The ESX-3 membrane complex is composed of EccB3, EccC3, EccD3 and EccE3.

It localises to the cell inner membrane. Its function is as follows. Part of the ESX-3 specialized secretion system, which is required for siderophore-mediated iron acquisition and for the secretion of EsxH and EsxG. This Mycolicibacterium smegmatis (strain ATCC 700084 / mc(2)155) (Mycobacterium smegmatis) protein is ESX-3 secretion system protein EccE3.